A 297-amino-acid polypeptide reads, in one-letter code: MTIKVIVVGAGGNLGHHIVSALDDDHRFTVTILARASSKSKFPSHITVHRVDDYYPELEVVEAFKGQDVVISTVTTGAIQRQKTLIDAALKAGVGRFIPSEFGHDTRNGNASKMLPQMYQQKREVVEYLRAKQNDGLEWTAFVTGPFLEVAIENFLGFNLSQQHATILNEGSDRWSATTRATVGLAVKNSLLIPEKTSNRYLFIDTVTASQNDVLLALRKMTGTEWGVDYVDAEEQKRVAIEHLSKGRLIGIPMLMRYITCVRGYGGDYLDYETSANEILSLPVRNVDEVIASILKG.

Belongs to the NmrA-type oxidoreductase family. Isoflavone reductase subfamily.

It functions in the pathway secondary metabolite biosynthesis. Functionally, oxidoreductase; part of the gene cluster that mediates the biosynthesis of the asperipin-2a, a bicyclic peptide that possesses two macrocyclic ether rings consisting of 14- and 17-membered paracyclophans. The pathway starts with the processing of the precursor aprA by kexin proteases to produce 11 identical copies of the hexapeptide Phe-Tyr-Tyr-Thr-Gly-Tyr. Macrocyclization of asperipin-2a may accompany an alpha-hydroxylation-dehydration sequence to give an imine, which is readily hydrolyzed to yield putative ketone intermediate. The reductase aprR may be required for the final reduction to yield asperipin-2a. This chain is Oxidoreductase aprR, found in Aspergillus flavus (strain ATCC 200026 / FGSC A1120 / IAM 13836 / NRRL 3357 / JCM 12722 / SRRC 167).